The chain runs to 189 residues: Interferon alpha-12 (189 aa).

The N-terminal stretch at 1 to 23 (MARLCAFLMTLLVMSYWSTCSLG) is a signal peptide. 2 disulfide bridges follow: Cys24-Cys122 and Cys52-Cys162. Asn101 carries N-linked (GlcNAc...) asparagine glycosylation.

This sequence belongs to the alpha/beta interferon family.

It is found in the secreted. In terms of biological role, produced by macrophages, IFN-alpha have antiviral activities. Interferon stimulates the production of two enzymes: a protein kinase and an oligoadenylate synthetase. This Mus musculus (Mouse) protein is Interferon alpha-12 (Ifna12).